A 277-amino-acid chain; its full sequence is Small ribosomal subunit protein uS3 (277 aa).

A KH type-2 domain is found at 43 to 111 (IRKVMNKDLE…QVQLNIFEVK (69 aa)). Residues 216–277 (FEEQQAQQGN…EAAVEPETKE (62 aa)) are disordered. A compositionally biased stretch (basic and acidic residues) spans 264-277 (EVSKEAAVEPETKE).

Belongs to the universal ribosomal protein uS3 family. Part of the 30S ribosomal subunit. Forms a tight complex with proteins S10 and S14.

Its function is as follows. Binds the lower part of the 30S subunit head. Binds mRNA in the 70S ribosome, positioning it for translation. This is Small ribosomal subunit protein uS3 from Bifidobacterium animalis subsp. lactis (strain AD011).